Consider the following 261-residue polypeptide: Transcription repressor OFP15 (261 aa).

The segment at 1-28 (MKLPFLNKNHSTSSYSSNSSSSSWPWPS) is disordered. The span at 11–28 (STSSYSSNSSSSSWPWPS) shows a compositional bias: low complexity. The region spanning 112 to 172 (FSLESDDPYS…FAAFVDLLMN (61 aa)) is the OVATE domain.

In terms of assembly, interacts with BLH1 and BLH3. As to expression, expressed in roots, cauline leaves, shoots, flower buds and siliques.

The protein resides in the nucleus. Its function is as follows. Transcriptional repressor that regulates multiple aspects of plant growth and development through the regulation of BEL1-LIKE (BLH) and KNOX TALE (KNAT) homeodomain transcription factors. The chain is Transcription repressor OFP15 (OFP15) from Arabidopsis thaliana (Mouse-ear cress).